The following is a 502-amino-acid chain: Maturase K (502 aa).

The protein belongs to the intron maturase 2 family. MatK subfamily.

The protein localises to the plastid. It is found in the chloroplast. In terms of biological role, usually encoded in the trnK tRNA gene intron. Probably assists in splicing its own and other chloroplast group II introns. This Arabis blepharophylla (Coast rock-cress) protein is Maturase K.